We begin with the raw amino-acid sequence, 353 residues long: Holliday junction branch migration complex subunit RuvB (353 aa).

The tract at residues 1-183 is large ATPase domain (RuvB-L); the sequence is MSGEGLVSAA…FGFTAHMDFY (183 aa). ATP is bound by residues leucine 22, arginine 23, glycine 64, lysine 67, threonine 68, serine 69, 130–132, arginine 173, tyrosine 183, and arginine 220; that span reads EDF. A Mg(2+)-binding site is contributed by threonine 68. The segment at 184–254 is small ATPAse domain (RuvB-S); the sequence is DAAELALVLT…VARAALRIYD (71 aa). Positions 257-353 are head domain (RuvB-H); that stretch reads ALGLDRLDRA…ALFGEDLPAS (97 aa). DNA contacts are provided by arginine 312 and arginine 317.

The protein belongs to the RuvB family. As to quaternary structure, homohexamer. Forms an RuvA(8)-RuvB(12)-Holliday junction (HJ) complex. HJ DNA is sandwiched between 2 RuvA tetramers; dsDNA enters through RuvA and exits via RuvB. An RuvB hexamer assembles on each DNA strand where it exits the tetramer. Each RuvB hexamer is contacted by two RuvA subunits (via domain III) on 2 adjacent RuvB subunits; this complex drives branch migration. In the full resolvosome a probable DNA-RuvA(4)-RuvB(12)-RuvC(2) complex forms which resolves the HJ.

It is found in the cytoplasm. It catalyses the reaction ATP + H2O = ADP + phosphate + H(+). Functionally, the RuvA-RuvB-RuvC complex processes Holliday junction (HJ) DNA during genetic recombination and DNA repair, while the RuvA-RuvB complex plays an important role in the rescue of blocked DNA replication forks via replication fork reversal (RFR). RuvA specifically binds to HJ cruciform DNA, conferring on it an open structure. The RuvB hexamer acts as an ATP-dependent pump, pulling dsDNA into and through the RuvAB complex. RuvB forms 2 homohexamers on either side of HJ DNA bound by 1 or 2 RuvA tetramers; 4 subunits per hexamer contact DNA at a time. Coordinated motions by a converter formed by DNA-disengaged RuvB subunits stimulates ATP hydrolysis and nucleotide exchange. Immobilization of the converter enables RuvB to convert the ATP-contained energy into a lever motion, pulling 2 nucleotides of DNA out of the RuvA tetramer per ATP hydrolyzed, thus driving DNA branch migration. The RuvB motors rotate together with the DNA substrate, which together with the progressing nucleotide cycle form the mechanistic basis for DNA recombination by continuous HJ branch migration. Branch migration allows RuvC to scan DNA until it finds its consensus sequence, where it cleaves and resolves cruciform DNA. This Parafrankia sp. (strain EAN1pec) protein is Holliday junction branch migration complex subunit RuvB.